The chain runs to 322 residues: F-box protein At2g16300 (322 aa).

Positions 2–50 (ADWSLLPNDLLELIVGHLETSFEIVLFRSVCSSWRSVVPPQDQSRCLSI) constitute an F-box domain.

The chain is F-box protein At2g16300 from Arabidopsis thaliana (Mouse-ear cress).